A 373-amino-acid polypeptide reads, in one-letter code: uncharacterized protein (373 aa).

One can recognise a CP-type G domain in the interval 14-168; it reads KKIVNKIIDE…LMDTPGVLEM (155 aa). GTP is bound at residue 117–124; that stretch reads GYPNVGKS.

The protein belongs to the TRAFAC class YlqF/YawG GTPase family.

This is an uncharacterized protein from Methanocaldococcus jannaschii (strain ATCC 43067 / DSM 2661 / JAL-1 / JCM 10045 / NBRC 100440) (Methanococcus jannaschii).